The sequence spans 750 residues: Photosystem I P700 chlorophyll a apoprotein A1 (750 aa).

A run of 8 helical transmembrane segments spans residues 70–93, 156–179, 195–219, 291–309, 346–369, 385–411, 433–455, and 531–549; these read VFSA…FHGA, LYCT…FHYH, LNHH…HVSL, IAHH…GHMY, WHAQ…HHMY, LSLF…IFMV, AIIS…LYIH, and FLVH…LILL. [4Fe-4S] cluster-binding residues include C573 and C582. Transmembrane regions (helical) follow at residues 589–610 and 664–686; these read HVFL…HFSW and LSAY…MFLF. H675 provides a ligand contact to chlorophyll a'. Chlorophyll a contacts are provided by M683 and Y691. W692 lines the phylloquinone pocket. A helical membrane pass occupies residues 724–744; it reads AVGVTHYLLGGIATTWAFFLA.

This sequence belongs to the PsaA/PsaB family. As to quaternary structure, the PsaA/B heterodimer binds the P700 chlorophyll special pair and subsequent electron acceptors. PSI consists of a core antenna complex that captures photons, and an electron transfer chain that converts photonic excitation into a charge separation. The eukaryotic PSI reaction center is composed of at least 11 subunits. P700 is a chlorophyll a/chlorophyll a' dimer, A0 is one or more chlorophyll a, A1 is one or both phylloquinones and FX is a shared 4Fe-4S iron-sulfur center. serves as cofactor.

It is found in the plastid. Its subcellular location is the chloroplast thylakoid membrane. The catalysed reaction is reduced [plastocyanin] + hnu + oxidized [2Fe-2S]-[ferredoxin] = oxidized [plastocyanin] + reduced [2Fe-2S]-[ferredoxin]. Its function is as follows. PsaA and PsaB bind P700, the primary electron donor of photosystem I (PSI), as well as the electron acceptors A0, A1 and FX. PSI is a plastocyanin-ferredoxin oxidoreductase, converting photonic excitation into a charge separation, which transfers an electron from the donor P700 chlorophyll pair to the spectroscopically characterized acceptors A0, A1, FX, FA and FB in turn. Oxidized P700 is reduced on the lumenal side of the thylakoid membrane by plastocyanin. This is Photosystem I P700 chlorophyll a apoprotein A1 from Aethionema grandiflorum (Persian stone-cress).